Here is a 548-residue protein sequence, read N- to C-terminus: Glucose-6-phosphate isomerase (548 aa).

Glutamate 355 serves as the catalytic Proton donor. Residues histidine 386 and lysine 514 contribute to the active site.

It belongs to the GPI family.

Its subcellular location is the cytoplasm. The enzyme catalyses alpha-D-glucose 6-phosphate = beta-D-fructose 6-phosphate. Its pathway is carbohydrate biosynthesis; gluconeogenesis. It participates in carbohydrate degradation; glycolysis; D-glyceraldehyde 3-phosphate and glycerone phosphate from D-glucose: step 2/4. Its function is as follows. Catalyzes the reversible isomerization of glucose-6-phosphate to fructose-6-phosphate. The polypeptide is Glucose-6-phosphate isomerase (Hamiltonella defensa subsp. Acyrthosiphon pisum (strain 5AT)).